A 302-amino-acid chain; its full sequence is GTPase Era (302 aa).

An Era-type G domain is found at 4–171 (KAGFVALVGR…KEKIVSLLPE (168 aa)). The tract at residues 12–19 (GRTNVGKS) is G1. 12-19 (GRTNVGKS) is a GTP binding site. Residues 38–42 (QTTRN) are G2. A G3 region spans residues 59-62 (DTPG). Residues 59–63 (DTPGI) and 121–124 (NKID) each bind GTP. Residues 121–124 (NKID) form a G4 region. The interval 150 to 152 (ISA) is G5. In terms of domain architecture, KH type-2 spans 202 to 280 (LEEEVPHGVY…FLDLWVKTRK (79 aa)).

This sequence belongs to the TRAFAC class TrmE-Era-EngA-EngB-Septin-like GTPase superfamily. Era GTPase family. Monomer.

It localises to the cytoplasm. The protein resides in the cell membrane. An essential GTPase that binds both GDP and GTP, with rapid nucleotide exchange. Plays a role in 16S rRNA processing and 30S ribosomal subunit biogenesis and possibly also in cell cycle regulation and energy metabolism. The protein is GTPase Era of Thermoanaerobacter pseudethanolicus (strain ATCC 33223 / 39E) (Clostridium thermohydrosulfuricum).